The following is a 106-amino-acid chain: Large ribosomal subunit protein uL24 (106 aa).

This sequence belongs to the universal ribosomal protein uL24 family. Part of the 50S ribosomal subunit.

Its function is as follows. One of two assembly initiator proteins, it binds directly to the 5'-end of the 23S rRNA, where it nucleates assembly of the 50S subunit. One of the proteins that surrounds the polypeptide exit tunnel on the outside of the subunit. The sequence is that of Large ribosomal subunit protein uL24 from Acidiphilium cryptum (strain JF-5).